An 87-amino-acid polypeptide reads, in one-letter code: Down syndrome critical region protein 10 (87 aa).

This chain is Down syndrome critical region protein 10 (DSCR10), found in Pan troglodytes (Chimpanzee).